The chain runs to 197 residues: Na(+)-translocating NADH-quinone reductase subunit E (197 aa).

The next 6 membrane-spanning stretches (helical) occupy residues 11–31 (SVFI…FLAV), 35–55 (VSTA…SVPV), 76–96 (FLKF…LEMF), 108–128 (LGIY…VSFM), 139–159 (VVYG…LAGI), and 175–195 (LGIT…FSGI).

This sequence belongs to the NqrDE/RnfAE family. As to quaternary structure, composed of six subunits; NqrA, NqrB, NqrC, NqrD, NqrE and NqrF.

The protein localises to the cell inner membrane. The catalysed reaction is a ubiquinone + n Na(+)(in) + NADH + H(+) = a ubiquinol + n Na(+)(out) + NAD(+). NQR complex catalyzes the reduction of ubiquinone-1 to ubiquinol by two successive reactions, coupled with the transport of Na(+) ions from the cytoplasm to the periplasm. NqrA to NqrE are probably involved in the second step, the conversion of ubisemiquinone to ubiquinol. The sequence is that of Na(+)-translocating NADH-quinone reductase subunit E from Neisseria meningitidis serogroup C (strain 053442).